Reading from the N-terminus, the 549-residue chain is MKNINPTQTSAWQALQKHYDEMKDVTIAELFANDSDRFAKFSATFDDLMLVDFSKNRITEETLAKLQDLAKETDLAGAIKSMFSGEKINRTEDRAVLHVALRNRSNTPIIVDGKDVMPEVNAVLEKMKTFSQAIISGQWKGYTGKAITDVVNIGIGGSDLGPFMVTEALRPYKNHLNMHFVSNVDGTHIAEVLKKVNPETTLFLVASKTFTTQETMTNAHSARDWFLKTAGDEKHVAKHFAALSTNAKAVGEFGIDTANMFEFWDWVGGRYSLWSAIGLSIILSVGFDNFVELLSGAHAMDKHFSTTPAEKNLPILLALIGIWYNNFFGAETEAILPYDQYMHRFAAYFQQGNMESNGKYVDRNGNAVDYQTGPIIWGEPGTNGQHAFYQLIHQGTKMVPCDFIAPAITHNPLSDHHQKLLSNFFAQTEALAFGKSREVVEQEYRDQGKDPAQLEHVVPFKVFEGNRPTNSILLREITPFSLGALIALYEHKIFTQGAILNIFTFDQWGVELGKQLANRILPELGDDKAISSHDSSTNGLINRYKAWRA.

The active-site Proton donor is the Glu355. Active-site residues include His386 and Lys514.

Belongs to the GPI family.

The protein resides in the cytoplasm. It catalyses the reaction alpha-D-glucose 6-phosphate = beta-D-fructose 6-phosphate. Its pathway is carbohydrate biosynthesis; gluconeogenesis. The protein operates within carbohydrate degradation; glycolysis; D-glyceraldehyde 3-phosphate and glycerone phosphate from D-glucose: step 2/4. In terms of biological role, catalyzes the reversible isomerization of glucose-6-phosphate to fructose-6-phosphate. This is Glucose-6-phosphate isomerase from Salmonella agona (strain SL483).